Here is a 311-residue protein sequence, read N- to C-terminus: MMKRIQIIDSHTGGEPTRLVVSGFPSLGNGTMAERRDVLAREHNRYRTACILEPRGSDVMVGALLCEPVSPEAAAGVIFFNNSGYLGMCGHGTIGVVRTLHHMGRIEPGVHRIETPVGTVEATLHDDLSVSVRNVLAYRHAKAVAVDVPGYGPVKGDIAWGGNWFFLISDHGQRVAGDNVAALTAYSSAVREGLERAGITGANGGEIDHIELFADDAEHDSRSFVLCPGHAYDRSPCGTGTSAKLACLAADGKLEPGVVWRQASVIGSVFQASYAQADGGIVPTIRGSAHLSAEATLLIEEDDPFGWGIVS.

Catalysis depends on Cys-89, which acts as the Proton acceptor. Substrate is bound by residues 90-91 (GH), His-209, and Asp-233. The Proton donor role is filled by Cys-237. 238–239 (GT) contributes to the substrate binding site.

This sequence belongs to the proline racemase family.

The catalysed reaction is trans-4-hydroxy-L-proline = cis-4-hydroxy-D-proline. Catalyzes the epimerization of trans-4-hydroxy-L-proline (t4LHyp) to cis-4-hydroxy-D-proline (c4DHyp). Is likely involved in a degradation pathway that converts t4LHyp to alpha-ketoglutarate. Displays no proline racemase activity. This chain is 4-hydroxyproline 2-epimerase, found in Burkholderia ambifaria (strain ATCC BAA-244 / DSM 16087 / CCUG 44356 / LMG 19182 / AMMD) (Burkholderia cepacia (strain AMMD)).